Reading from the N-terminus, the 963-residue chain is Importin-13 (963 aa).

HEAT repeat units follow at residues 24–54 (ENVEKALHQLYYDPNIENKNLAQKWLMQAQV), 56–88 (PQAWHFSWQLLQPDKVPEIQYFGASALHIKISR), 95–135 (TDQY…LSMM), 142–179 (AVADMVRLFQAEDSPVDGQGRCLALLELLTVLPEEFQT), 194–231 (LAVECGAVFPLLEQLLQQPSSPSCVRQKVLKCFSSWVQ), 236–268 (LQDCEALIQAAFAALQDSELFDSSVEAIVNAIS), 276–325 (VNTL…ALLD), 330–372 (WQSF…DDIL), 375–438 (EAEK…YEML), 440–476 (AELLSNLYDKLGRLLTSSEEPYSWQHTEALLYGFQSI), 487–522 (VVPGLIGLIPRISISNVQLADTVMFTIGALSEWLAD), 524–558 (PVMINSVLPLVLHALGNPELSVSSVSTLKKICREC), 562–600 (LPPYAANIVAVSQDVLMKQIHKTSQCMWLMQALGFLLSA), 603–648 (VEEI…SNLF), 676–716 (PVVV…VKTL), 720–754 (FAPMVPQLCEMLGRMYSTIPQASALDLTRQLVHIF), 761–803 (FPPI…ALKR), 815–845 (VKAVFQCAVLALKFPEAPTVKASCGFFTELL), 860–893 (EDGRMLLIAVLEAIGGQASRSLMDCFADILFALN), and 897–931 (FSLLSMWIKEALQPPGFPSARLSPEQKDTFSQQIL). Residues 45-111 (AQKWLMQAQV…KAQLFTQITR (67 aa)) enclose the Importin N-terminal domain.

The protein belongs to the importin beta family. Interacts with UBC9, RAN, RBM8A, eIF-1A and PAX6. As to expression, expressed in fetal brain, heart, intestine and kidney.

The protein resides in the cytoplasm. Its subcellular location is the nucleus. Functions in nuclear protein import as nuclear transport receptor. Serves as receptor for nuclear localization signals (NLS) in cargo substrates. Is thought to mediate docking of the importin/substrate complex to the nuclear pore complex (NPC) through binding to nucleoporin and the complex is subsequently translocated through the pore by an energy requiring, Ran-dependent mechanism. At the nucleoplasmic side of the NPC, Ran binds to the importin, the importin/substrate complex dissociates and importin is re-exported from the nucleus to the cytoplasm where GTP hydrolysis releases Ran. The directionality of nuclear import is thought to be conferred by an asymmetric distribution of the GTP- and GDP-bound forms of Ran between the cytoplasm and nucleus. Mediates the nuclear import of UBC9, the RBM8A/MAGOH complex, PAX6 and probably other members of the paired homeobox family. Also mediates nuclear export of eIF-1A, and the cytoplasmic release of eIF-1A is triggered by the loading of import substrates onto IPO13. The chain is Importin-13 (IPO13) from Homo sapiens (Human).